The following is a 263-amino-acid chain: LIM and SH3 domain protein 1 (263 aa).

An N-acetylmethionine modification is found at Met1. The LIM zinc-binding domain occupies 5 to 56 (CARCGKIVYPTEKVNCLDKYWHKACFHCETCKMTLNMKNYKGYEKKPYCNAH). Lys42 is subject to N6-acetyllysine. 2 Nebulin repeats span residues 61 to 95 (SFTMVADTPENLRLKQQSELQSQVRYKEEFEKNKG) and 97 to 131 (GFSVVADTPELQRIKKTQDQISNIKYHEEFEKSRM). Thr68 carries the phosphothreonine modification. Residue Lys75 is modified to N6-methyllysine. Position 99 is a phosphoserine (Ser99). The residue at position 104 (Thr104) is a Phosphothreonine. Position 112 is an N6-succinyllysine (Lys112). A phosphoserine mark is found at Ser118 and Ser134. Residues 123 to 207 (HEEFEKSRMG…QRSAPGGGGK (85 aa)) form a disordered region. Polar residues predominate over residues 148-162 (DSSSYRRPTEQQQPQ). Thr156 carries the post-translational modification Phosphothreonine; by PKA. Residues 204 to 263 (GGGKRYRAVYDYSAADEDEVSFQDGDTIVNVQQIDDGWMYGTVERTGDTGMLPANYVEAI) form the SH3 domain.

As to quaternary structure, interacts with F-actin. Interacts with KBTBD10. Interacts with ANKRD54.

It is found in the cytoplasm. Its subcellular location is the cell cortex. It localises to the cytoskeleton. Its function is as follows. Plays an important role in the regulation of dynamic actin-based, cytoskeletal activities. Agonist-dependent changes in LASP1 phosphorylation may also serve to regulate actin-associated ion transport activities, not only in the parietal cell but also in certain other F-actin-rich secretory epithelial cell types. This Mus musculus (Mouse) protein is LIM and SH3 domain protein 1 (Lasp1).